The following is a 319-amino-acid chain: Phospho-N-acetylmuramoyl-pentapeptide-transferase (319 aa).

The next 9 helical transmembrane spans lie at 5–25, 51–71, 79–99, 119–139, 149–169, 173–193, 197–217, 224–246, and 299–319; these read LIAF…LIIW, TMGG…ICAY, VWIL…DDGL, LLVA…FALY, VVLF…AVNL, LDGL…WLAF, NFGV…FFMF, IFMG…IFLG, and VDLV…MIWG.

It belongs to the glycosyltransferase 4 family. MraY subfamily. Mg(2+) is required as a cofactor.

The protein resides in the cell membrane. It carries out the reaction UDP-N-acetyl-alpha-D-muramoyl-L-alanyl-gamma-D-glutamyl-L-lysyl-D-alanyl-D-alanine + di-trans,octa-cis-undecaprenyl phosphate = Mur2Ac(oyl-L-Ala-gamma-D-Glu-L-Lys-D-Ala-D-Ala)-di-trans,octa-cis-undecaprenyl diphosphate + UMP. It functions in the pathway cell wall biogenesis; peptidoglycan biosynthesis. Functionally, catalyzes the initial step of the lipid cycle reactions in the biosynthesis of the cell wall peptidoglycan: transfers peptidoglycan precursor phospho-MurNAc-pentapeptide from UDP-MurNAc-pentapeptide onto the lipid carrier undecaprenyl phosphate, yielding undecaprenyl-pyrophosphoryl-MurNAc-pentapeptide, known as lipid I. The chain is Phospho-N-acetylmuramoyl-pentapeptide-transferase from Lactobacillus delbrueckii subsp. bulgaricus (strain ATCC BAA-365 / Lb-18).